A 274-amino-acid polypeptide reads, in one-letter code: NH(3)-dependent NAD(+) synthetase (274 aa).

46–53 (GISGGQDS) contributes to the ATP binding site. Position 52 (Asp52) interacts with Mg(2+). Arg140 serves as a coordination point for deamido-NAD(+). ATP is bound at residue Thr160. Glu165 serves as a coordination point for Mg(2+). Positions 173 and 180 each coordinate deamido-NAD(+). ATP contacts are provided by Lys189 and Thr211. 260 to 261 (HK) contributes to the deamido-NAD(+) binding site.

Belongs to the NAD synthetase family. In terms of assembly, homodimer.

It carries out the reaction deamido-NAD(+) + NH4(+) + ATP = AMP + diphosphate + NAD(+) + H(+). It functions in the pathway cofactor biosynthesis; NAD(+) biosynthesis; NAD(+) from deamido-NAD(+) (ammonia route): step 1/1. Catalyzes the ATP-dependent amidation of deamido-NAD to form NAD. Uses ammonia as a nitrogen source. The protein is NH(3)-dependent NAD(+) synthetase of Streptococcus pyogenes serotype M6 (strain ATCC BAA-946 / MGAS10394).